The chain runs to 394 residues: Ribulose bisphosphate carboxylase large chain (394 aa).

Position 5 is an N6,N6,N6-trimethyllysine (Lys5). Substrate is bound by residues Asn114 and Thr164. Lys166 (proton acceptor) is an active-site residue. Lys168 provides a ligand contact to substrate. Mg(2+) contacts are provided by Lys192, Asp194, and Glu195. At Lys192 the chain carries N6-carboxylysine. His285 functions as the Proton acceptor in the catalytic mechanism. The substrate site is built by Arg286, His318, and Ser370.

Belongs to the RuBisCO large chain family. Type I subfamily. In terms of assembly, heterohexadecamer of 8 large chains and 8 small chains; disulfide-linked. The disulfide link is formed within the large subunit homodimers. It depends on Mg(2+) as a cofactor. In terms of processing, the disulfide bond which can form in the large chain dimeric partners within the hexadecamer appears to be associated with oxidative stress and protein turnover.

It localises to the plastid. The protein localises to the chloroplast. It carries out the reaction 2 (2R)-3-phosphoglycerate + 2 H(+) = D-ribulose 1,5-bisphosphate + CO2 + H2O. The catalysed reaction is D-ribulose 1,5-bisphosphate + O2 = 2-phosphoglycolate + (2R)-3-phosphoglycerate + 2 H(+). Its function is as follows. RuBisCO catalyzes two reactions: the carboxylation of D-ribulose 1,5-bisphosphate, the primary event in carbon dioxide fixation, as well as the oxidative fragmentation of the pentose substrate in the photorespiration process. Both reactions occur simultaneously and in competition at the same active site. The sequence is that of Ribulose bisphosphate carboxylase large chain (rbcL) from Nelumbo lutea (American lotus).